Here is a 383-residue protein sequence, read N- to C-terminus: Putative dehydratase subunit YjiM (383 aa).

This sequence belongs to the FldB/FldC dehydratase alpha/beta subunit family.

This chain is Putative dehydratase subunit YjiM (yjiM), found in Escherichia coli (strain K12).